The following is a 284-amino-acid chain: 1D-myo-inositol 2-acetamido-2-deoxy-alpha-D-glucopyranoside deacetylase (284 aa).

3 residues coordinate Zn(2+): His12, Asp15, and His146.

The protein belongs to the MshB deacetylase family. Zn(2+) serves as cofactor.

It catalyses the reaction 1D-myo-inositol 2-acetamido-2-deoxy-alpha-D-glucopyranoside + H2O = 1D-myo-inositol 2-amino-2-deoxy-alpha-D-glucopyranoside + acetate. In terms of biological role, catalyzes the deacetylation of 1D-myo-inositol 2-acetamido-2-deoxy-alpha-D-glucopyranoside (GlcNAc-Ins) in the mycothiol biosynthesis pathway. The polypeptide is 1D-myo-inositol 2-acetamido-2-deoxy-alpha-D-glucopyranoside deacetylase (Mycolicibacterium gilvum (strain PYR-GCK) (Mycobacterium gilvum (strain PYR-GCK))).